A 220-amino-acid chain; its full sequence is Cytidylate kinase (220 aa).

9–17 (GPAASGKST) provides a ligand contact to ATP.

The protein belongs to the cytidylate kinase family. Type 1 subfamily.

It is found in the cytoplasm. The enzyme catalyses CMP + ATP = CDP + ADP. The catalysed reaction is dCMP + ATP = dCDP + ADP. The sequence is that of Cytidylate kinase from Thermotoga maritima (strain ATCC 43589 / DSM 3109 / JCM 10099 / NBRC 100826 / MSB8).